The chain runs to 132 residues: Large ribosomal subunit protein uL22 (132 aa).

The protein belongs to the universal ribosomal protein uL22 family. Part of the 50S ribosomal subunit.

Its function is as follows. This protein binds specifically to 23S rRNA; its binding is stimulated by other ribosomal proteins, e.g. L4, L17, and L20. It is important during the early stages of 50S assembly. It makes multiple contacts with different domains of the 23S rRNA in the assembled 50S subunit and ribosome. In terms of biological role, the globular domain of the protein is located near the polypeptide exit tunnel on the outside of the subunit, while an extended beta-hairpin is found that lines the wall of the exit tunnel in the center of the 70S ribosome. This is Large ribosomal subunit protein uL22 from Pelagibacter ubique (strain HTCC1062).